The primary structure comprises 596 residues: Protein Malvolio (596 aa).

The interval 1–34 is disordered; that stretch reads MSSNEAYHEPGAGGDGPGGSSGASGGGSQRSNQL. Positions 11-28 are enriched in gly residues; the sequence is GAGGDGPGGSSGASGGGS. The N-linked (GlcNAc...) asparagine glycan is linked to asparagine 41. 7 helical membrane-spanning segments follow: residues 77 to 97, 105 to 125, 154 to 174, 186 to 206, 216 to 236, 263 to 283, and 309 to 329; these read LWAF…PGNI, AAAK…GLLM, WILW…EVIG, VVPL…FLFL, FLFG…YIVS, AVGV…SALV, and VALF…AHGM. Residue asparagine 359 is glycosylated (N-linked (GlcNAc...) asparagine). 5 helical membrane passes run 373–393, 424–444, 463–483, 490–510, and 520–540; these read LFLG…GILA, VLVT…FSKM, PFAA…GEFV, IVSI…VVVQ, and LLAL…YLVI. N-linked (GlcNAc...) asparagine glycosylation is present at asparagine 574.

Belongs to the NRAMP family. As to expression, expressed in macrophages and in the nervous system.

The protein resides in the membrane. Putative transporter required for normal taste behavior. May be a nitrite/nitrate transporter. The chain is Protein Malvolio (Mvl) from Drosophila melanogaster (Fruit fly).